The primary structure comprises 491 residues: Glutamyl-tRNA(Gln) amidotransferase subunit A (491 aa).

Active-site charge relay system residues include K79 and S158. The active-site Acyl-ester intermediate is S182.

The protein belongs to the amidase family. GatA subfamily. Heterotrimer of A, B and C subunits.

The catalysed reaction is L-glutamyl-tRNA(Gln) + L-glutamine + ATP + H2O = L-glutaminyl-tRNA(Gln) + L-glutamate + ADP + phosphate + H(+). Allows the formation of correctly charged Gln-tRNA(Gln) through the transamidation of misacylated Glu-tRNA(Gln) in organisms which lack glutaminyl-tRNA synthetase. The reaction takes place in the presence of glutamine and ATP through an activated gamma-phospho-Glu-tRNA(Gln). The sequence is that of Glutamyl-tRNA(Gln) amidotransferase subunit A from Anaplasma phagocytophilum (strain HZ).